Reading from the N-terminus, the 495-residue chain is NADH-ubiquinone oxidoreductase chain 4 (495 aa).

11 helical membrane-spanning segments follow: residues 9 to 29, 39 to 59, 89 to 109, 139 to 159, 173 to 193, 214 to 234, 272 to 292, 313 to 333, 335 to 355, 367 to 387, and 413 to 433; these read YSNLSGLILCPVLGSITPLFI, LIGLCASLITFLYSPVPRIQF, ISLFFVILTTFLIPICISVGW, LLLFYVFPESVPIPMFIIIGV, FFLYTLLGSLFMLLAILLILF, IFLWIASFASFAVKVPMVPVH, FPEATLCSTPFIYTLSAIAII, VAHMNLVTIGMFSPNIQGIGG, ILPMLSHGLVPSALFLCVGVL, YGGLVSTMPNLSTIFFSFTLA, and LVATLAALGMILGAAYSLWLY.

It belongs to the complex I subunit 4 family.

Its subcellular location is the mitochondrion membrane. It catalyses the reaction a ubiquinone + NADH + 5 H(+)(in) = a ubiquinol + NAD(+) + 4 H(+)(out). Functionally, core subunit of the mitochondrial membrane respiratory chain NADH dehydrogenase (Complex I) that is believed to belong to the minimal assembly required for catalysis. Complex I functions in the transfer of electrons from NADH to the respiratory chain. The immediate electron acceptor for the enzyme is believed to be ubiquinone. The sequence is that of NADH-ubiquinone oxidoreductase chain 4 (ND4) from Brassica campestris (Field mustard).